The primary structure comprises 307 residues: GTPase Era (307 aa).

An Era-type G domain is found at 14–184 (HSGFVAIVGK…REQILDILPE (171 aa)). The G1 stretch occupies residues 22 to 29 (GKPNVGKS). 22–29 (GKPNVGKS) serves as a coordination point for GTP. Positions 48-52 (QTTRR) are G2. Residues 69–72 (DTPG) form a G3 region. GTP contacts are provided by residues 69–73 (DTPGL) and 131–134 (NKTD). Residues 131-134 (NKTD) are G4. Positions 162–164 (LSA) are G5. The KH type-2 domain maps to 215-292 (LREELPYAVA…FLGLEVIVIP (78 aa)).

It belongs to the TRAFAC class TrmE-Era-EngA-EngB-Septin-like GTPase superfamily. Era GTPase family. In terms of assembly, monomer.

It localises to the cytoplasm. It is found in the cell membrane. Its function is as follows. An essential GTPase that binds both GDP and GTP, with rapid nucleotide exchange. Plays a role in 16S rRNA processing and 30S ribosomal subunit biogenesis and possibly also in cell cycle regulation and energy metabolism. In Deinococcus deserti (strain DSM 17065 / CIP 109153 / LMG 22923 / VCD115), this protein is GTPase Era.